A 292-amino-acid polypeptide reads, in one-letter code: tRNA pseudouridine synthase B (292 aa).

Aspartate 40 (nucleophile) is an active-site residue.

This sequence belongs to the pseudouridine synthase TruB family. Type 1 subfamily.

The catalysed reaction is uridine(55) in tRNA = pseudouridine(55) in tRNA. Responsible for synthesis of pseudouridine from uracil-55 in the psi GC loop of transfer RNAs. In Mycoplasma capricolum subsp. capricolum (strain California kid / ATCC 27343 / NCTC 10154), this protein is tRNA pseudouridine synthase B.